Reading from the N-terminus, the 458-residue chain is UDP-N-acetylmuramate--L-alanine ligase (458 aa).

118–124 serves as a coordination point for ATP; that stretch reads GTHGKTT.

It belongs to the MurCDEF family.

It is found in the cytoplasm. The catalysed reaction is UDP-N-acetyl-alpha-D-muramate + L-alanine + ATP = UDP-N-acetyl-alpha-D-muramoyl-L-alanine + ADP + phosphate + H(+). Its pathway is cell wall biogenesis; peptidoglycan biosynthesis. In terms of biological role, cell wall formation. The sequence is that of UDP-N-acetylmuramate--L-alanine ligase from Clostridium novyi (strain NT).